We begin with the raw amino-acid sequence, 162 residues long: Beta-carotene hydroxylase (162 aa).

A Fatty acid hydroxylase domain is found at Val-8–Phe-135.

It belongs to the sterol desaturase family.

It catalyses the reaction all-trans-beta-carotene + 4 reduced [2Fe-2S]-[ferredoxin] + 2 O2 + 4 H(+) = all-trans-zeaxanthin + 4 oxidized [2Fe-2S]-[ferredoxin] + 2 H2O. The protein operates within carotenoid biosynthesis; astaxanthin biosynthesis. In terms of biological role, catalyzes the hydroxylation reaction from beta-carotene to zeaxanthin via beta-cryptoxanthin. In Paracoccus sp. (strain PC1) (Alcaligenes sp. (strain PC1)), this protein is Beta-carotene hydroxylase (crtZ).